A 169-amino-acid polypeptide reads, in one-letter code: Mu-like prophage FluMu host-nuclease inhibitor protein gam (169 aa).

This sequence to phage Mu protein gam.

Its function is as follows. Protects linear double-stranded DNA of Mu genome from exonuclease degradation. The protein is Mu-like prophage FluMu host-nuclease inhibitor protein gam of Haemophilus influenzae (strain ATCC 51907 / DSM 11121 / KW20 / Rd).